Reading from the N-terminus, the 343-residue chain is Coiled-coil domain-containing protein 97 (343 aa).

N-acetylmethionine is present on M1. The disordered stretch occupies residues 1–37 (MEAVATATAAKEPDKGCIEPGPGHWGELSRTPVPSKP). At T47 the chain carries Phosphothreonine. Disordered regions lie at residues 200–220 (ARTP…ACPL), 234–277 (QQRL…DSEE), and 292–343 (RFLD…LDGD). Residues 224-262 (LLQSYEERELQQRLLQQQEEEEACLEEEEEEEDSDEEDQ) adopt a coiled-coil conformation. Over residues 241–261 (QEEEEACLEEEEEEEDSDEED) the composition is skewed to acidic residues. A compositionally biased stretch (basic and acidic residues) spans 262 to 277 (QRSGKDSEAWVPDSEE). Phosphoserine is present on residues S275 and S337. Residues 324–343 (ERYFDEEEPEDAPSPELDGD) show a composition bias toward acidic residues.

In terms of assembly, associates with splicing factor SF3B complex, involved in branch-site recognition.

It localises to the nucleus. In terms of biological role, may play a role pre-mRNA splicing through the association with the splicing factor SF3B complex which is involved in branch-site recognition. The protein is Coiled-coil domain-containing protein 97 (CCDC97) of Homo sapiens (Human).